Here is a 153-residue protein sequence, read N- to C-terminus: Endoribonuclease YbeY (153 aa).

Zn(2+)-binding residues include H114, H118, and H124.

This sequence belongs to the endoribonuclease YbeY family. Zn(2+) serves as cofactor.

It is found in the cytoplasm. Its function is as follows. Single strand-specific metallo-endoribonuclease involved in late-stage 70S ribosome quality control and in maturation of the 3' terminus of the 16S rRNA. This chain is Endoribonuclease YbeY, found in Nitrosococcus oceani (strain ATCC 19707 / BCRC 17464 / JCM 30415 / NCIMB 11848 / C-107).